The sequence spans 101 residues: Large ribosomal subunit protein uL23 (101 aa).

It belongs to the universal ribosomal protein uL23 family. Part of the 50S ribosomal subunit. Contacts protein L29, and trigger factor when it is bound to the ribosome.

One of the early assembly proteins it binds 23S rRNA. One of the proteins that surrounds the polypeptide exit tunnel on the outside of the ribosome. Forms the main docking site for trigger factor binding to the ribosome. The chain is Large ribosomal subunit protein uL23 from Kocuria rhizophila (strain ATCC 9341 / DSM 348 / NBRC 103217 / DC2201).